The following is a 3739-amino-acid chain: Pikromycin polyketide synthase component PikAII (3739 aa).

The region spanning 35-463 (GEPVAIVGMA…GTNAHVVLEE (429 aa)) is the Ketosynthase family 3 (KS3) 1 domain. 2 module regions span residues 38 to 1517 (VAIV…EFLL) and 1542 to 3642 (VAIV…GHLL). The active-site Acyl-thioester intermediate; for beta-ketoacyl synthase 1 activity is the C208. Catalysis depends on for beta-ketoacyl synthase 1 activity residues H343 and H383. An acyltransferase 1 region spans residues 572–877 (FVFPGQGTQW…ERLVTSLAEA (306 aa)). The active-site Acyl-ester intermediate; for acyltransferase 1 activity is S662. Positions 1150 to 1343 (GTVLVTGAEE…VTSVAWSPWE (194 aa)) are C2-type beta-ketoacyl reductase 1. The active-site For C2-type beta-ketoacyl reductase 1 and probable racemase activities is Y1313. Residues 1445-1520 (RRMQELVREH…TLAEFLLAEI (76 aa)) form the Carrier 1 domain. S1480 bears the O-(pantetheine 4'-phosphoryl)serine mark. The Ketosynthase family 3 (KS3) 2 domain maps to 1539 to 1967 (DEPVAIVGMA…GTNAHIVLEE (429 aa)). C1712 acts as the Acyl-thioester intermediate; for beta-ketoacyl synthase 2 activity in catalysis. Catalysis depends on for beta-ketoacyl synthase 2 activity residues H1847 and H1887. The tract at residues 2069 to 2374 (FVFPGQGTQW…HRLTTSLAEA (306 aa)) is acyltransferase 2. The active-site Acyl-ester intermediate; for acyltransferase 2 activity is S2159. The interval 2428 to 2553 (HPLLGAAVAL…GVLAARADRT (126 aa)) is N-terminal hotdog fold. A dehydratase region spans residues 2428-2703 (HPLLGAAVAL…LTVLPVDPAQ (276 aa)). Residues 2428 to 2705 (HPLLGAAVAL…VLPVDPAQLA (278 aa)) form the PKS/mFAS DH domain. The Proton acceptor; for dehydratase activity role is filled by H2460. Residues 2567-2705 (AEPVDVDGLY…VLPVDPAQLA (139 aa)) are C-terminal hotdog fold. Residue D2629 is the Proton donor; for dehydratase activity of the active site. Residues 2959–3267 (GSLESLTAAP…QARHTGKVVL (309 aa)) form an enoyl reductase region. Y3005 serves as the catalytic For enoyl reductase activity. NADP(+) is bound by residues 3092–3109 (LLVH…VQLA), 3285–3288 (TGAL), 3309–3312 (SRRG), 3338–3339 (DV), K3388, and 3412–3413 (FS). The beta-ketoacyl reductase 2 stretch occupies residues 3277–3458 (GTVLLTGGTG…LSLGWGLWAE (182 aa)). The active-site For beta-ketoacyl reductase 2 activity is the Y3427. A Carrier 2 domain is found at 3570–3645 (AHLRDLVRTH…ELAGHLLDEL (76 aa)). S3605 carries the O-(pantetheine 4'-phosphoryl)serine modification.

As to quaternary structure, homodimer. Pikromycin PKS consists of a combination of multimodular (PikAI and PikAII) and monomodular (PikAIII and PikAIV) polypeptides each coding for a functional synthase subunit which participates in 1 (monomodular) or 2 (multimodular) of the six FAS-like elongation steps required for formation of the polyketide. Module 1, 2, 3, 4, 5, and 6 participating in biosynthesis steps 1, 2, 3, 4, 5, and 6, respectively. It depends on pantetheine 4'-phosphate as a cofactor.

The catalysed reaction is 5 (S)-methylmalonyl-CoA + malonyl-CoA + 5 NADPH + 11 H(+) = 10-deoxymethynolide + 6 CO2 + 5 NADP(+) + 6 CoA + 2 H2O. It carries out the reaction 6 (S)-methylmalonyl-CoA + malonyl-CoA + 5 NADPH + 12 H(+) = narbonolide + 7 CO2 + 5 NADP(+) + 7 CoA + 2 H2O. It functions in the pathway antibiotic biosynthesis. Its function is as follows. Involved in the biosynthesis of 12- and 14-membered ring macrolactone antibiotics such as methymycin/neomethymycin and pikromycin/narbomycin, respectively. Component of the pikromycin PKS which catalyzes the biosynthesis of both precursors 10-deoxymethynolide (12-membered ring macrolactone) and narbonolide (14-membered ring macrolactone). Chain elongation through PikAI, PikAII and PikAIII followed by thioesterase catalyzed termination results in the production of 10-deoxymethynolide, while continued elongation through PikAIV, followed by thioesterase (TE) catalyzed cyclization results in the biosynthesis of the narbonolide. In Streptomyces venezuelae, this protein is Pikromycin polyketide synthase component PikAII.